Here is a 251-residue protein sequence, read N- to C-terminus: Protein phosphatase 1 regulatory subunit 35 (251 aa).

Disordered regions lie at residues Leu58–His99 and Pro180–Pro235. The segment covering Pro76–His99 has biased composition (basic and acidic residues).

It belongs to the PPP1R35 family.

Its subcellular location is the cytoplasm. The protein localises to the cytoskeleton. The protein resides in the microtubule organizing center. It localises to the centrosome. It is found in the centriole. Its function is as follows. During centriole duplication, may play a role in the centriole elongation by promoting the recruitment of the microtubule-binding elongation machinery, leading to the centriole to centrosome conversion. In addition may play a role in the primary cilia assembly. The sequence is that of Protein phosphatase 1 regulatory subunit 35 from Danio rerio (Zebrafish).